The sequence spans 306 residues: GTPase Era (306 aa).

In terms of domain architecture, Era-type G spans 13–181 (YCGFIAIVGR…EKIVRESLHE (169 aa)). Positions 21-28 (GRPNVGKS) are G1. 21 to 28 (GRPNVGKS) contacts GTP. The tract at residues 47–51 (QTTRH) is G2. Positions 68–71 (DTPG) are G3. Residues 68 to 72 (DTPGL) and 130 to 133 (NKID) each bind GTP. The G4 stretch occupies residues 130 to 133 (NKID). The interval 160–162 (ISA) is G5. Residues 212–289 (TGDELPYSVT…HLELWVKVKS (78 aa)) enclose the KH type-2 domain.

This sequence belongs to the TRAFAC class TrmE-Era-EngA-EngB-Septin-like GTPase superfamily. Era GTPase family. Monomer.

The protein resides in the cytoplasm. The protein localises to the cell inner membrane. Functionally, an essential GTPase that binds both GDP and GTP, with rapid nucleotide exchange. Plays a role in 16S rRNA processing and 30S ribosomal subunit biogenesis and possibly also in cell cycle regulation and energy metabolism. In Pasteurella multocida (strain Pm70), this protein is GTPase Era.